The sequence spans 610 residues: Transcription termination factor Rho (610 aa).

Positions 117 to 227 (EVSRRERRGA…GDGAEAELRQ (111 aa)) are disordered. The span at 118–131 (VSRRERRGASREAD) shows a compositional bias: basic and acidic residues. The segment covering 178-187 (GVEQQSSSLQ) has biased composition (polar residues). Residues 189 to 198 (RGDDDGEGRQ) are compositionally biased toward basic and acidic residues. The segment covering 199–214 (GRRGRRFRDRDRRRRG) has biased composition (basic residues). Positions 215 to 227 (ERSGDGAEAELRQ) are enriched in basic and acidic residues. The 79-residue stretch at 231-309 (VQPVAGILDV…VRLDSINGGS (79 aa)) folds into the Rho RNA-BD domain. ATP contacts are provided by residues 352–357 (GKGQRA), 364–369 (KAGKTT), and R395.

Belongs to the Rho family. As to quaternary structure, homohexamer. The homohexamer assembles into an open ring structure.

Facilitates transcription termination by a mechanism that involves Rho binding to the nascent RNA, activation of Rho's RNA-dependent ATPase activity, and release of the mRNA from the DNA template. The polypeptide is Transcription termination factor Rho (Mycobacterium leprae (strain TN)).